A 228-amino-acid polypeptide reads, in one-letter code: Protein slowmo homolog (228 aa).

One can recognise a PRELI/MSF1 domain in the interval 1 to 172 (MPLFETIKHT…TIIKVQKEAE (172 aa)).

The protein belongs to the slowmo family.

The chain is Protein slowmo homolog (slmo) from Dictyostelium discoideum (Social amoeba).